A 518-amino-acid polypeptide reads, in one-letter code: Vesicular inhibitory amino acid transporter (518 aa).

Topologically, residues Met-1–Met-125 are cytoplasmic. Positions Glu-66–Cys-98 are disordered. A helical transmembrane segment spans residues Phe-126–Ile-146. Topologically, residues Phe-147–Arg-197 are lumenal, vesicle. The chain crosses the membrane as a helical span at residues Val-198–Ser-218. Over Gly-219 to Lys-258 the chain is Cytoplasmic. A helical membrane pass occupies residues Phe-259 to Leu-279. Residues Ser-280 to Lys-298 lie on the Lumenal, vesicle side of the membrane. The chain crosses the membrane as a helical span at residues Phe-299 to Leu-319. Over Glu-320 to Asn-334 the chain is Cytoplasmic. The helical transmembrane segment at Trp-335–Trp-355 threads the bilayer. Residues Ala-356–Asn-376 are Lumenal, vesicle-facing. The chain crosses the membrane as a helical span at residues Leu-377 to Val-397. Residues Leu-398–Ala-431 lie on the Cytoplasmic side of the membrane. The helical transmembrane segment at Leu-432 to Leu-452 threads the bilayer. The Lumenal, vesicle segment spans residues Thr-453 to Gly-454. Residues Ser-455–Trp-475 form a helical membrane-spanning segment. The Cytoplasmic portion of the chain corresponds to Arg-476 to Gln-482. The helical transmembrane segment at Val-483–His-503 threads the bilayer. Over Ser-504–Asp-518 the chain is Lumenal, vesicle.

This sequence belongs to the amino acid/polyamine transporter 2 family.

It localises to the cytoplasmic vesicle membrane. The protein localises to the presynapse. It catalyses the reaction 4-aminobutanoate(out) + n H(+)(in) = 4-aminobutanoate(in) + n H(+)(out). The catalysed reaction is glycine(out) + n H(+)(in) = glycine(in) + n H(+)(out). The enzyme catalyses beta-alanine(out) + n H(+)(in) = beta-alanine(in) + n H(+)(out). Antiporter that exchanges vesicular protons for cytosolic 4-aminobutanoate or to a lesser extend glycine, thus allowing their secretion from nerve terminals. The transport is equally dependent on the chemical and electrical components of the proton gradient. May also transport beta-alanine. Acidification of GABAergic synaptic vesicles is a prerequisite for 4-aminobutanoate uptake. The chain is Vesicular inhibitory amino acid transporter from Xenopus tropicalis (Western clawed frog).